A 263-amino-acid polypeptide reads, in one-letter code: Endonuclease 8 (263 aa).

P2 functions as the Schiff-base intermediate with DNA in the catalytic mechanism. E3 (proton donor) is an active-site residue. K53 serves as the catalytic Proton donor; for beta-elimination activity. DNA contacts are provided by Q70, R125, and N169. An FPG-type zinc finger spans residues 229-263 (KVFHRDGEACERCGGIIEKTTLSSRPFYWCPHCQK). Residue R253 is the Proton donor; for delta-elimination activity of the active site.

Belongs to the FPG family. Zn(2+) is required as a cofactor.

It catalyses the reaction 2'-deoxyribonucleotide-(2'-deoxyribose 5'-phosphate)-2'-deoxyribonucleotide-DNA = a 3'-end 2'-deoxyribonucleotide-(2,3-dehydro-2,3-deoxyribose 5'-phosphate)-DNA + a 5'-end 5'-phospho-2'-deoxyribonucleoside-DNA + H(+). Its function is as follows. Involved in base excision repair of DNA damaged by oxidation or by mutagenic agents. Acts as a DNA glycosylase that recognizes and removes damaged bases. Has a preference for oxidized pyrimidines, such as thymine glycol, 5,6-dihydrouracil and 5,6-dihydrothymine. Has AP (apurinic/apyrimidinic) lyase activity and introduces nicks in the DNA strand. Cleaves the DNA backbone by beta-delta elimination to generate a single-strand break at the site of the removed base with both 3'- and 5'-phosphates. The sequence is that of Endonuclease 8 from Salmonella heidelberg (strain SL476).